A 131-amino-acid polypeptide reads, in one-letter code: Type IV wide pilus major component PilA4 (131 aa).

Positions 1–6 (MRNAKG) are cleaved as a propeptide — leader sequence. Residue phenylalanine 7 is modified to N-methylphenylalanine. Residues 7-27 (FTLIELLIVIAIIAILAAVLI) traverse the membrane as a helical segment. Cysteine 95 and cysteine 130 are oxidised to a cystine.

In terms of assembly, interacts with PilQ. Post-translationally, found in three forms of 14-kDa, 18-kDa and a glycosylated 23-kDa form. Both narrow and wide pili are glycosylated.

It is found in the cell inner membrane. It localises to the cell outer membrane. The protein resides in the periplasm. Functionally, plays an essential role in the assembly of two types of T4P pili: a wide and a narrow that participate in natural transformation and twitching motility. Major component of the wide pilus that is essential for natural transformation working as a DNA translocator structure that spans the inner and outer membranes. In addition, participates in the assembly of the narrow pilus composed of the PilA5 subunit that is required for twitching motility. The chain is Type IV wide pilus major component PilA4 (pilA4) from Thermus thermophilus (strain ATCC BAA-163 / DSM 7039 / HB27).